The following is a 251-amino-acid chain: Regulator of G-protein signaling 9-binding protein C (251 aa).

At 1–230 (MPLQNVKVAD…NSKGCCSDGQ (230 aa)) the chain is on the cytoplasmic side. Coiled coils occupy residues 53–94 (LRDE…ELER) and 158–187 (ANKASLEYQEIEEEILKVDNMITDMEMKVN). A helical; Anchor for type IV membrane protein transmembrane segment spans residues 231 to 250 (LIVSLLLCGTALVAITLYSI). A topological domain (extracellular) is located at residue Leu-251.

This sequence belongs to the RGS7BP/RGS9BP family.

The protein resides in the membrane. Functionally, regulator of G protein-coupled receptor (GPCR) signaling. Probably acts by regulating the activity of some 'R7' family protein (RGS6, RGS7, RGS9 and/or RGS11). This Xenopus laevis (African clawed frog) protein is Regulator of G-protein signaling 9-binding protein C (rgs9bp-c).